The following is an 822-amino-acid chain: Nose resistant to fluoxetine protein 6 (822 aa).

An N-terminal signal peptide occupies residues 1–24 (MGNMRRLLIFAVLVILTVISNSKS). An N-linked (GlcNAc...) asparagine glycan is attached at Asn-236. The next 3 membrane-spanning stretches (helical) occupy residues 306-326 (LAMF…FGTL), 617-637 (PYIR…LNAW), and 655-675 (IICW…LYWF).

The protein belongs to the acyltransferase 3 family. In terms of tissue distribution, in L1 larvae through to adult, hyp3 and hyp5, the most anterior cells in the hypodermis, and in intestine. Other hypodermal cells show weaker expression.

It localises to the membrane. In terms of biological role, plays a role in the uptake of a range of molecules including lipids and xenobiotic compounds from the intestine to surrounding tissues. Mediates transport of lipids from intestine to the reproductive tract. Required for efficient yolk transport into oocytes. Vital for embryonic development. The chain is Nose resistant to fluoxetine protein 6 (nrf-6) from Caenorhabditis elegans.